Reading from the N-terminus, the 207-residue chain is Large ribosomal subunit protein uL4 (207 aa).

Positions 44-78 are disordered; it reads LRQGTHKTKTRSEVRGGGRKPWRQKGTGRARQGSI. Residues 60–71 are compositionally biased toward basic residues; sequence GGRKPWRQKGTG.

It belongs to the universal ribosomal protein uL4 family. As to quaternary structure, part of the 50S ribosomal subunit.

In terms of biological role, one of the primary rRNA binding proteins, this protein initially binds near the 5'-end of the 23S rRNA. It is important during the early stages of 50S assembly. It makes multiple contacts with different domains of the 23S rRNA in the assembled 50S subunit and ribosome. Functionally, forms part of the polypeptide exit tunnel. This Halalkalibacterium halodurans (strain ATCC BAA-125 / DSM 18197 / FERM 7344 / JCM 9153 / C-125) (Bacillus halodurans) protein is Large ribosomal subunit protein uL4.